Here is a 572-residue protein sequence, read N- to C-terminus: Na(+)/citrate cotransporter (572 aa).

A run of 8 helical transmembrane segments spans residues 13–33, 53–73, 80–100, 124–144, 218–238, 255–275, 315–335, and 357–377; these read SFVI…LVPD, VIPV…LKVL, VQYM…ATAV, LMLG…NTAT, AASI…VLLG, SWFA…WLWL, PLSY…ILWF, and HVTD…VPSQ. N382 is a glycosylation site (N-linked (GlcNAc...) asparagine). The next 4 helical transmembrane spans lie at 410–430, 443–463, 491–511, and 532–552; these read VPWG…GCET, PLSS…VAMT, PLYV…LPVA, and TGLV…NTWG. The N-linked (GlcNAc...) asparagine glycan is linked to N566.

It belongs to the SLC13A/DASS transporter (TC 2.A.47) family. NADC subfamily. In terms of assembly, homodimer. As to expression, expressed in liver, testis and brain.

It localises to the cell membrane. It carries out the reaction citrate(out) + 4 Na(+)(out) = citrate(in) + 4 Na(+)(in). Inhibited by Li(+). High-affinity sodium/citrate cotransporter that mediates citrate entry into cells, which is a critical participant of biochemical pathways. May function in various metabolic processes in which citrate has a critical role such as energy production (Krebs cycle), fatty acid synthesis, cholesterol synthesis, glycolysis, and gluconeogenesis. Transports citrate into the cell in a Na(+)-dependent manner, recognizing the trivalent form of citrate (physiological pH) rather than the divalent form. Can recognize succinate as a substrate, but its affinity for succinate is several fold lower than for citrate. The stoichiometry is probably 4 Na(+) for each carboxylate, irrespective of whether the translocated substrate is divalent or trivalent, rendering the process electrogenic. Involved in the regulation of citrate levels in the brain. This Rattus norvegicus (Rat) protein is Na(+)/citrate cotransporter (Slc13a5).